The following is a 498-amino-acid chain: POTE ankyrin domain family member A (498 aa).

ANK repeat units lie at residues 98–127 (KKRTALHLACANGNSEVVSLLLDRQCQLHV), 131–160 (KKRTALIKAVQCQEDECALMLLQHGTDPNL), 164–193 (YGNTALHYAVYNEDKLMAKTLLLYGADIES), 197–226 (GGLTPLLLAVHGQKQRMVKFLIKKKANLNA), and 230–259 (FGRTALILAVRCGSASIVSLLLQQNIDVFS). The interval 289–410 (NQMPNNSSGN…SNEKNKVKSQ (122 aa)) is disordered. Polar residues predominate over residues 290–302 (QMPNNSSGNSNPE). Basic and acidic residues predominate over residues 303-338 (QDLKLTSEEEPQRLKGSENSQHEKVTQEPDINKDCD). Positions 348-359 (HGSNNVGLSENL) are enriched in polar residues. The segment covering 392 to 406 (EEYHRPEKKSNEKNK) has biased composition (basic and acidic residues). Residues 469–497 (EHLLELKNSHYEQLTVEVEQMENMVHVLQ) are a coiled coil.

This sequence belongs to the POTE family.

The sequence is that of POTE ankyrin domain family member A (POTEA) from Homo sapiens (Human).